The sequence spans 919 residues: Bifunctional uridylyltransferase/uridylyl-removing enzyme (919 aa).

The tract at residues 1 to 373 is uridylyltransferase; that stretch reads MTDPKVPRQR…LAGFNAKSRM (373 aa). The tract at residues 374–727 is uridylyl-removing; that stretch reads LKGYTVFGGK…CEFDEERGAT (354 aa). The region spanning 489 to 611 is the HD domain; that stretch reads VDEHTIRAIG…VQSLERLRHL (123 aa). ACT domains follow at residues 728 to 811 and 839 to 919; these read LVTV…LAKR and VIEV…LEPA.

This sequence belongs to the GlnD family. Requires Mg(2+) as cofactor.

It catalyses the reaction [protein-PII]-L-tyrosine + UTP = [protein-PII]-uridylyl-L-tyrosine + diphosphate. It carries out the reaction [protein-PII]-uridylyl-L-tyrosine + H2O = [protein-PII]-L-tyrosine + UMP + H(+). With respect to regulation, uridylyltransferase (UTase) activity is inhibited by glutamine, while glutamine activates uridylyl-removing (UR) activity. In terms of biological role, modifies, by uridylylation and deuridylylation, the PII regulatory proteins (GlnB and homologs), in response to the nitrogen status of the cell that GlnD senses through the glutamine level. Under low glutamine levels, catalyzes the conversion of the PII proteins and UTP to PII-UMP and PPi, while under higher glutamine levels, GlnD hydrolyzes PII-UMP to PII and UMP (deuridylylation). Thus, controls uridylylation state and activity of the PII proteins, and plays an important role in the regulation of nitrogen assimilation and metabolism. This Erythrobacter litoralis (strain HTCC2594) protein is Bifunctional uridylyltransferase/uridylyl-removing enzyme.